A 214-amino-acid polypeptide reads, in one-letter code: Thymidylate kinase (214 aa).

10-17 (GPDGAGKT) contributes to the ATP binding site.

It belongs to the thymidylate kinase family.

The catalysed reaction is dTMP + ATP = dTDP + ADP. In terms of biological role, phosphorylation of dTMP to form dTDP in both de novo and salvage pathways of dTTP synthesis. The polypeptide is Thymidylate kinase (Lacticaseibacillus casei (strain BL23) (Lactobacillus casei)).